The following is a 267-amino-acid chain: MWWFQQGLSFLPSALVIWTFATFIFSYITAITLHHVDPALPYISDTGTMPPERCLFGVMLNIAAVLGIATIYVRYKQVHALNPEENLIIKLNKAGLVLGILSCLGLSLVANFQKSALFIVHVCGAVLAFSMGSFYMFVQTILSYQMQPKIHSKQVFWVRLLLVIWCGVSALSMMTCSSILYSSDFGADIVQKLHWNPEDKGYVLHIVTTAAEWSMSFSFFGFFLTYIRDFQKITLRVEANLHGLTLYDTVPCPVTNERTPLLSRDFQ.

Transmembrane regions (helical) follow at residues 8–28 (LSFLPSALVIWTFATFIFSYI), 53–73 (RCLFGVMLNIAAVLGIATIYV), 87–107 (LIIKLNKAGLVLGILSCLGLS), 118–138 (FIVHVCGAVLAFSMGSFYMFV), 160–180 (LLLVIWCGVSALSMMTCSSIL), and 203–223 (VLHIVTTAAEWSMSFSFFGFF).

Belongs to the DRAM/TMEM150 family.

The protein localises to the lysosome membrane. It localises to the photoreceptor inner segment. The protein resides in the apical cell membrane. Its function is as follows. Plays a role in the initiation of autophagy. In the retina, might be involved in the process of photoreceptor cells renewal and recycling to preserve visual function. Induces apoptotic cell death when coexpressed with DRAM1. The sequence is that of DNA damage-regulated autophagy modulator protein 2 (Dram2) from Rattus norvegicus (Rat).